Consider the following 183-residue polypeptide: MDIDPYKEFGASVELFSFLASDFFPSVRDLLDTASALYRDALESPEHCTPNHTALRQAILCWGELMTLASWVGNNLEDPAARDLVVNYVNTNMGLKIRQLLWFHISCLTFGRETVLEYLVSFGVWIRTPPAYRPPNAPILSTLPETTVVRRRGRSPRRRTPSPRRRRSQSPRRRRSQSPASQC.

A disordered region spans residues 136 to 183 (NAPILSTLPETTVVRRRGRSPRRRTPSPRRRRSQSPRRRRSQSPASQC). A compositionally biased stretch (basic residues) spans 149–176 (VRRRGRSPRRRTPSPRRRRSQSPRRRRS). Ser-155, Ser-162, and Ser-170 each carry phosphoserine; by host. The stretch at 155–161 (SPRRRTP) is one 1; half-length repeat. The tract at residues 155–177 (SPRRRTPSPRRRRSQSPRRRRSQ) is 3 X 8 AA repeats of S-P-R-R-R-[PR]-S-Q. Positions 158–175 (RRTPSPRRRRSQSPRRRR) match the Bipartite nuclear localization signal motif. 2 consecutive repeat copies span residues 162–169 (SPRRRRSQ) and 170–177 (SPRRRRSQ). The tract at residues 177–183 (QSPASQC) is RNA binding.

It belongs to the orthohepadnavirus core antigen family. In terms of assembly, homodimerizes, then multimerizes. Interacts with cytosol exposed regions of viral L glycoprotein present in the reticulum-to-Golgi compartment. Interacts with human FLNB. Phosphorylated form interacts with host importin alpha; this interaction depends on the exposure of the NLS, which itself depends upon genome maturation and/or phosphorylation of the capsid protein. Interacts with host NUP153. In terms of processing, phosphorylated by host SRPK1, SRPK2, and maybe protein kinase C or GAPDH. Phosphorylation is critical for pregenomic RNA packaging. Protein kinase C phosphorylation is stimulated by HBx protein and may play a role in transport of the viral genome to the nucleus at the late step during the viral replication cycle.

It localises to the virion. Its subcellular location is the host cytoplasm. In terms of biological role, self assembles to form an icosahedral capsid. Most capsids appear to be large particles with an icosahedral symmetry of T=4 and consist of 240 copies of capsid protein, though a fraction forms smaller T=3 particles consisting of 180 capsid proteins. Entering capsids are transported along microtubules to the nucleus. Phosphorylation of the capsid is thought to induce exposure of nuclear localization signal in the C-terminal portion of the capsid protein that allows binding to the nuclear pore complex via the importin (karyopherin-) alpha and beta. Capsids are imported in intact form through the nuclear pore into the nuclear basket, where it probably binds NUP153. Only capsids that contain the mature viral genome can release the viral DNA and capsid protein into the nucleoplasm. Immature capsids get stuck in the basket. Capsids encapsulate the pre-genomic RNA and the P protein. Pre-genomic RNA is reverse-transcribed into DNA while the capsid is still in the cytoplasm. The capsid can then either be directed to the nucleus, providing more genomes for transcription, or bud through the endoplasmic reticulum to provide new virions. The chain is Capsid protein from Homo sapiens (Human).